A 273-amino-acid chain; its full sequence is 2,3,4,5-tetrahydropyridine-2,6-dicarboxylate N-succinyltransferase (273 aa).

This sequence belongs to the transferase hexapeptide repeat family.

The protein resides in the cytoplasm. It carries out the reaction (S)-2,3,4,5-tetrahydrodipicolinate + succinyl-CoA + H2O = (S)-2-succinylamino-6-oxoheptanedioate + CoA. The protein operates within amino-acid biosynthesis; L-lysine biosynthesis via DAP pathway; LL-2,6-diaminopimelate from (S)-tetrahydrodipicolinate (succinylase route): step 1/3. This Acinetobacter baumannii (strain AB307-0294) protein is 2,3,4,5-tetrahydropyridine-2,6-dicarboxylate N-succinyltransferase.